Reading from the N-terminus, the 669-residue chain is DNA ligase (669 aa).

NAD(+) is bound by residues aspartate 34–aspartate 38, serine 83–leucine 84, and glutamate 113. Lysine 115 (N6-AMP-lysine intermediate) is an active-site residue. NAD(+) is bound by residues arginine 136, glutamate 170, lysine 286, and lysine 310. Positions 404, 407, 422, and 427 each coordinate Zn(2+). The region spanning isoleucine 591 to histidine 669 is the BRCT domain.

The protein belongs to the NAD-dependent DNA ligase family. LigA subfamily. Mg(2+) is required as a cofactor. Mn(2+) serves as cofactor.

It carries out the reaction NAD(+) + (deoxyribonucleotide)n-3'-hydroxyl + 5'-phospho-(deoxyribonucleotide)m = (deoxyribonucleotide)n+m + AMP + beta-nicotinamide D-nucleotide.. In terms of biological role, DNA ligase that catalyzes the formation of phosphodiester linkages between 5'-phosphoryl and 3'-hydroxyl groups in double-stranded DNA using NAD as a coenzyme and as the energy source for the reaction. It is essential for DNA replication and repair of damaged DNA. This is DNA ligase from Halalkalibacterium halodurans (strain ATCC BAA-125 / DSM 18197 / FERM 7344 / JCM 9153 / C-125) (Bacillus halodurans).